The sequence spans 945 residues: Bifunctional glutamine synthetase adenylyltransferase/adenylyl-removing enzyme (945 aa).

An adenylyl removase region spans residues 1–441 (MLPLSAALQT…VFNDLIGDDS (441 aa)). Residues 450–945 (YQHYHSLWQD…VRASWAKWLG (496 aa)) are adenylyl transferase.

It belongs to the GlnE family. Mg(2+) is required as a cofactor.

It carries out the reaction [glutamine synthetase]-O(4)-(5'-adenylyl)-L-tyrosine + phosphate = [glutamine synthetase]-L-tyrosine + ADP. The catalysed reaction is [glutamine synthetase]-L-tyrosine + ATP = [glutamine synthetase]-O(4)-(5'-adenylyl)-L-tyrosine + diphosphate. Functionally, involved in the regulation of glutamine synthetase GlnA, a key enzyme in the process to assimilate ammonia. When cellular nitrogen levels are high, the C-terminal adenylyl transferase (AT) inactivates GlnA by covalent transfer of an adenylyl group from ATP to specific tyrosine residue of GlnA, thus reducing its activity. Conversely, when nitrogen levels are low, the N-terminal adenylyl removase (AR) activates GlnA by removing the adenylyl group by phosphorolysis, increasing its activity. The regulatory region of GlnE binds the signal transduction protein PII (GlnB) which indicates the nitrogen status of the cell. This Serratia proteamaculans (strain 568) protein is Bifunctional glutamine synthetase adenylyltransferase/adenylyl-removing enzyme.